The sequence spans 122 residues: Large ribosomal subunit protein bL17 (122 aa).

Belongs to the bacterial ribosomal protein bL17 family. Part of the 50S ribosomal subunit. Contacts protein L32.

The protein is Large ribosomal subunit protein bL17 of Staphylococcus aureus (strain Mu3 / ATCC 700698).